Consider the following 1314-residue polypeptide: SWI/SNF chromatin-remodeling complex subunit SWI1 (1314 aa).

3 stretches are compositionally biased toward low complexity: residues 1 to 65 (MDFF…NTNT), 88 to 112 (SNNN…STNF), and 213 to 235 (ISQN…ANQQ). 4 disordered regions span residues 1-112 (MDFF…STNF), 213-250 (ISQN…GNLT), 262-321 (NSMD…STSN), and 355-384 (QNQQ…RQQQ). Residues 1 to 323 (MDFFNLNNNN…NTNNSTSNAN (323 aa)) are prion domain (PrD). The segment covering 236 to 250 (FLPFNNSASNNGNLT) has biased composition (polar residues). Positions 406-493 (NKQYELFMKS…ILLPYERHMI (88 aa)) constitute an ARID domain. Low complexity predominate over residues 581–592 (NVNNNNIGQQQV). The interval 581–617 (NVNNNNIGQQQVKKPRKQRVKKKTKKELELERKERED) is disordered. The span at 593–605 (KKPRKQRVKKKTK) shows a compositional bias: basic residues. The segment covering 606 to 617 (KELELERKERED) has biased composition (basic and acidic residues). The C4-type zinc-finger motif lies at 1241 to 1258 (CVQLIKCLVEKSICFENC).

It belongs to the SWI1 family. In terms of assembly, component of the SWI/SNF global transcription activator complex. The 1.14 MDa SWI/SNF complex is composed of 11 different subunits: one copy each of SWI1, SNF2/SWI2, SNF5, SNF12/SWP73, ARP7/SWP61, ARP9/SWP59; two copies each of SWI3, SNF6, SNF11, SWP82; and three copies of TAF14/SWP29.

The protein localises to the nucleus. Its function is as follows. Involved in transcriptional activation. Component of the SWI/SNF complex, an ATP-dependent chromatin remodeling complex, which is required for the positive and negative regulation of gene expression of a large number of genes. It changes chromatin structure by altering DNA-histone contacts within a nucleosome, leading eventually to a change in nucleosome position, thus facilitating or repressing binding of gene-specific transcription factors. The sequence is that of SWI/SNF chromatin-remodeling complex subunit SWI1 (SWI1) from Saccharomyces cerevisiae (strain ATCC 204508 / S288c) (Baker's yeast).